A 233-amino-acid chain; its full sequence is DnaA regulatory inactivator Hda (233 aa).

The protein belongs to the DnaA family. HdA subfamily. The active form seems to be an ADP-bound monomer. Forms the RIDA complex (regulatory inactivation of DnaA) of ATP-DnaA, ADP-Hda and the DNA-loaded beta sliding clamp (dnaN).

Mediates the interaction of DNA replication initiator protein DnaA with DNA polymerase subunit beta sliding clamp (dnaN). Stimulates hydrolysis of ATP-DnaA to ADP-DnaA, rendering DnaA inactive for reinitiation, a process called regulatory inhibition of DnaA or RIDA. In Photorhabdus laumondii subsp. laumondii (strain DSM 15139 / CIP 105565 / TT01) (Photorhabdus luminescens subsp. laumondii), this protein is DnaA regulatory inactivator Hda.